Reading from the N-terminus, the 24-residue chain is 29 kDa outer membrane protein (24 aa).

The protein localises to the cell outer membrane. May be involved in transporting molecules across the outer membrane. The sequence is that of 29 kDa outer membrane protein from Acinetobacter baumannii.